A 113-amino-acid polypeptide reads, in one-letter code: Probable UPF0122 protein (113 aa).

Belongs to the UPF0122 family.

In terms of biological role, might take part in the signal recognition particle (SRP) pathway. This is inferred from the conservation of its genetic proximity to ftsY/ffh. May be a regulatory protein. This Mycoplasma mycoides protein is Probable UPF0122 protein.